Here is a 185-residue protein sequence, read N- to C-terminus: Elongation factor P (185 aa).

The protein belongs to the elongation factor P family.

Its subcellular location is the cytoplasm. It participates in protein biosynthesis; polypeptide chain elongation. In terms of biological role, involved in peptide bond synthesis. Stimulates efficient translation and peptide-bond synthesis on native or reconstituted 70S ribosomes in vitro. Probably functions indirectly by altering the affinity of the ribosome for aminoacyl-tRNA, thus increasing their reactivity as acceptors for peptidyl transferase. The chain is Elongation factor P from Picosynechococcus sp. (strain ATCC 27264 / PCC 7002 / PR-6) (Agmenellum quadruplicatum).